The sequence spans 83 residues: UPF0457 protein YnzG (83 aa).

This sequence belongs to the UPF0457 family.

The sequence is that of UPF0457 protein YnzG (ynzG) from Bacillus subtilis (strain 168).